A 371-amino-acid polypeptide reads, in one-letter code: UDP-N-acetylglucosamine--N-acetylmuramyl-(pentapeptide) pyrophosphoryl-undecaprenol N-acetylglucosamine transferase (371 aa).

UDP-N-acetyl-alpha-D-glucosamine is bound by residues 15–17 (TGG), Asn-126, Arg-169, Ser-197, and Gln-298.

The protein belongs to the glycosyltransferase 28 family. MurG subfamily.

It is found in the cell inner membrane. It catalyses the reaction di-trans,octa-cis-undecaprenyl diphospho-N-acetyl-alpha-D-muramoyl-L-alanyl-D-glutamyl-meso-2,6-diaminopimeloyl-D-alanyl-D-alanine + UDP-N-acetyl-alpha-D-glucosamine = di-trans,octa-cis-undecaprenyl diphospho-[N-acetyl-alpha-D-glucosaminyl-(1-&gt;4)]-N-acetyl-alpha-D-muramoyl-L-alanyl-D-glutamyl-meso-2,6-diaminopimeloyl-D-alanyl-D-alanine + UDP + H(+). The protein operates within cell wall biogenesis; peptidoglycan biosynthesis. Functionally, cell wall formation. Catalyzes the transfer of a GlcNAc subunit on undecaprenyl-pyrophosphoryl-MurNAc-pentapeptide (lipid intermediate I) to form undecaprenyl-pyrophosphoryl-MurNAc-(pentapeptide)GlcNAc (lipid intermediate II). This chain is UDP-N-acetylglucosamine--N-acetylmuramyl-(pentapeptide) pyrophosphoryl-undecaprenol N-acetylglucosamine transferase, found in Paramagnetospirillum magneticum (strain ATCC 700264 / AMB-1) (Magnetospirillum magneticum).